The sequence spans 592 residues: MNDSCSWDQLWDQQGTLNEYTGKGIDLLERIMAYSKERASIELEYSSKLKALSKKTAMKMKSESELWNSVSYVKGFHDVIAGIVPVATQHELIAENLKSAVIPFTTQKIAEYRVAKKQLESDNSNLGKQLRMVIDEMAKSHKEYVKCYKETEAAMLKYAKAEKNMDISRLELEKTKNNYQQKCGMLEESKQTYAVMTTKANEEQSAHYDRKLPQLLDNYKKLHTNRILDTVEILSKCVEAESCVNQIIASCHNDMRRDIGLIDPSRDANLVVENMKSGHPVPQPFVFEDLGHPQDRSSFMGGGASGPAGSMDGMDATMKKGGTLMSKNGKGVARKQSMHQKFFGGGTADKKTDSGDYGTLPPQQRARKIAGKISDLEKEKDRATQSREGVSKMQAAYRENPKLGNPSDCDAQLAQYGHEIDALSNQIQKFKILLDDVNAQLGAGGLSATSVGGSDTPPSIRSVSSASSGVTSRVNTINDAHRTNGGVGGGRRESFSGSNGGSDTDPTINGNGHGRDELYEECSNPNPVLGEAIAQFAFDGAQDGTIRMEANEKLWLIEKDEGDGWTRVRKENNSADGFVPSSYLKVTWFGKV.

The region spanning 3 to 267 (DSCSWDQLWD…DIGLIDPSRD (265 aa)) is the F-BAR domain. 2 disordered regions span residues 343–366 (FGGGTADKKTDSGDYGTLPPQQRA) and 447–519 (SATS…DELY). The 78-residue stretch at 359 to 436 (TLPPQQRARK…IQKFKILLDD (78 aa)) folds into the REM-1 domain. The stretch at 363–441 (QQRARKIAGK…ILLDDVNAQL (79 aa)) forms a coiled coil. Polar residues predominate over residues 447 to 457 (SATSVGGSDTP). Low complexity predominate over residues 459–474 (SIRSVSSASSGVTSRV). A compositionally biased stretch (polar residues) spans 495-510 (FSGSNGGSDTDPTING). In terms of domain architecture, SH3 spans 527 to 589 (PVLGEAIAQF…PSSYLKVTWF (63 aa)).

It belongs to the FNBP1 family. Interacts (via SH3 domain) with wsp-1. Interacts with cdc-42 and (via SH3 domain) with wve-1. In terms of tissue distribution, expressed in the germline and specifically in the gonads.

The protein resides in the cell junction. It localises to the apical cell membrane. Its subcellular location is the basolateral cell membrane. The protein localises to the cytoplasmic vesicle. It is found in the cytoplasm. The protein resides in the perinuclear region. It localises to the recycling endosome. Functionally, plays a role in protein trafficking, actin organization and embryonic morphogenesis. Potentially acts as a cdc-42 effector. May play a role in hypodermal P-cell nuclear positioning. Together with toca-2, is required for protein trafficking regulating yolk protein clathrin-mediated endocytosis by oocytes during oogenesis and retrograde recycling and the sorting of recycling endosome cargo proteins such as mig-14. Also, together with toca-2, controls the distribution of actin at cell junctions. In Caenorhabditis elegans, this protein is Transducer of Cdc42-dependent actin assembly protein 1 homolog.